We begin with the raw amino-acid sequence, 1244 residues long: Membrane-associated phosphatidylinositol transfer protein 1 (1244 aa).

Thr59 carries the post-translational modification Phosphothreonine. 2 disordered regions span residues 258–331 and 339–358; these read KCNT…QSLS and ARDS…EGFS. Thr287 carries the phosphothreonine; by CDK1 modification. Residues 299–319 show a composition bias toward low complexity; the sequence is ASPDASFGKQWSSSSRSSYSS. Phosphoserine is present on residues Ser300, Ser304, Ser319, Ser326, Ser329, Ser342, Ser345, Ser346, and Ser373. Ser382 bears the Phosphoserine; by CDK1 mark. The disordered stretch occupies residues 581 to 682; sequence AGTGSRGSSR…SSEAPDGPSS (102 aa). Phosphoserine is present on residues Ser593, Ser600, and Ser621. Over residues 643–658 the composition is skewed to polar residues; that stretch reads GSQNSLQAAPATTSSW. In terms of domain architecture, DDHD spans 686-880; that stretch reads LDFKVSGFFL…VAFILRQVIE (195 aa). Ser896 carries the phosphoserine modification. The disordered stretch occupies residues 1206 to 1244; sequence QLLRSRGPSQAEREGPGTPPTTLARGKARSISLKLDSEE. Omega-N-methylarginine occurs at positions 1211 and 1218. A Phosphoserine modification is found at Ser1237.

This sequence belongs to the PtdIns transfer protein family. PI transfer class IIA subfamily. Interacts with PIK4CA. Interacts with PTK2B via its C-terminus. Interacts with RHOA. Has higher affinity for the inactive, GDP-bound form of RHOA. The CDK1-phosphorylated form interacts with PLK1. Interacts with VAPB. In terms of processing, phosphorylated on multiple sites by CDK1 at the onset of mitosis. Phosphorylation facilitates dissociation from the Golgi complex and is required for interaction with PLK1. Phosphorylated on threonine residues upon treatment with oleic acid. Post-translationally, phosphorylated on tyrosine residues by PTK2B. As to expression, ubiquitous.

It is found in the cytoplasm. Its subcellular location is the golgi apparatus. It localises to the golgi stack membrane. The protein resides in the endoplasmic reticulum membrane. The protein localises to the lipid droplet. It is found in the cleavage furrow. Its subcellular location is the midbody. It carries out the reaction a 1,2-diacyl-sn-glycero-3-phospho-(1D-myo-inositol)(in) = a 1,2-diacyl-sn-glycero-3-phospho-(1D-myo-inositol)(out). Catalyzes the transfer of phosphatidylinositol (PI) between membranes. Binds PI, phosphatidylcholine (PC) and phosphatidic acid (PA) with the binding affinity order of PI &gt; PA &gt; PC. Regulates RHOA activity, and plays a role in cytoskeleton remodeling. Necessary for normal completion of cytokinesis. Plays a role in maintaining normal diacylglycerol levels in the Golgi apparatus. Necessary for maintaining the normal structure of the endoplasmic reticulum and the Golgi apparatus. Required for protein export from the endoplasmic reticulum and the Golgi. Binds calcium ions. The chain is Membrane-associated phosphatidylinositol transfer protein 1 (PITPNM1) from Homo sapiens (Human).